The sequence spans 476 residues: Proline--tRNA ligase (476 aa).

Belongs to the class-II aminoacyl-tRNA synthetase family. ProS type 3 subfamily. As to quaternary structure, homodimer.

Its subcellular location is the cytoplasm. It carries out the reaction tRNA(Pro) + L-proline + ATP = L-prolyl-tRNA(Pro) + AMP + diphosphate. Catalyzes the attachment of proline to tRNA(Pro) in a two-step reaction: proline is first activated by ATP to form Pro-AMP and then transferred to the acceptor end of tRNA(Pro). The polypeptide is Proline--tRNA ligase (Rubrobacter xylanophilus (strain DSM 9941 / JCM 11954 / NBRC 16129 / PRD-1)).